We begin with the raw amino-acid sequence, 170 residues long: Small ribosomal subunit protein uS5 (170 aa).

An S5 DRBM domain is found at 16-79 (IEDQLVAINR…EAGKKNMISV (64 aa)).

The protein belongs to the universal ribosomal protein uS5 family. In terms of assembly, part of the 30S ribosomal subunit. Contacts proteins S4 and S8.

In terms of biological role, with S4 and S12 plays an important role in translational accuracy. Its function is as follows. Located at the back of the 30S subunit body where it stabilizes the conformation of the head with respect to the body. This chain is Small ribosomal subunit protein uS5, found in Lactobacillus delbrueckii subsp. bulgaricus (strain ATCC 11842 / DSM 20081 / BCRC 10696 / JCM 1002 / NBRC 13953 / NCIMB 11778 / NCTC 12712 / WDCM 00102 / Lb 14).